The primary structure comprises 355 residues: Chorismate synthase (355 aa).

Arg-48 lines the NADP(+) pocket. FMN-binding positions include 125–127 (RSS), 238–239 (NA), Gly-278, 293–297 (KPASS), and Arg-319.

This sequence belongs to the chorismate synthase family. Homotetramer. The cofactor is FMNH2.

It catalyses the reaction 5-O-(1-carboxyvinyl)-3-phosphoshikimate = chorismate + phosphate. The protein operates within metabolic intermediate biosynthesis; chorismate biosynthesis; chorismate from D-erythrose 4-phosphate and phosphoenolpyruvate: step 7/7. Its function is as follows. Catalyzes the anti-1,4-elimination of the C-3 phosphate and the C-6 proR hydrogen from 5-enolpyruvylshikimate-3-phosphate (EPSP) to yield chorismate, which is the branch point compound that serves as the starting substrate for the three terminal pathways of aromatic amino acid biosynthesis. This reaction introduces a second double bond into the aromatic ring system. This Baumannia cicadellinicola subsp. Homalodisca coagulata protein is Chorismate synthase.